We begin with the raw amino-acid sequence, 214 residues long: ATP-dependent Clp protease proteolytic subunit 3 (214 aa).

The active-site Nucleophile is S106. The active site involves H131.

This sequence belongs to the peptidase S14 family. Fourteen ClpP subunits assemble into 2 heptameric rings which stack back to back to give a disk-like structure with a central cavity, resembling the structure of eukaryotic proteasomes.

The protein resides in the cytoplasm. It catalyses the reaction Hydrolysis of proteins to small peptides in the presence of ATP and magnesium. alpha-casein is the usual test substrate. In the absence of ATP, only oligopeptides shorter than five residues are hydrolyzed (such as succinyl-Leu-Tyr-|-NHMec, and Leu-Tyr-Leu-|-Tyr-Trp, in which cleavage of the -Tyr-|-Leu- and -Tyr-|-Trp bonds also occurs).. Cleaves peptides in various proteins in a process that requires ATP hydrolysis. Has a chymotrypsin-like activity. Plays a major role in the degradation of misfolded proteins. The protein is ATP-dependent Clp protease proteolytic subunit 3 of Trichormus variabilis (strain ATCC 29413 / PCC 7937) (Anabaena variabilis).